A 699-amino-acid chain; its full sequence is eEF1A lysine and N-terminal methyltransferase (699 aa).

Methionine 1 carries the post-translational modification N-acetylmethionine. Serine 267 carries the post-translational modification Phosphoserine. Positions 433 to 460 are disordered; that stretch reads VSHRAQKKRKKDRKKHRPADTPEDLPAA. Positions 436 to 449 are enriched in basic residues; that stretch reads RAQKKRKKDRKKHR.

The protein belongs to the methyltransferase superfamily. In terms of assembly, forms a tripartite complex containing GAB1, METTL13 and SPRY2. Within the complex interacts with GAB1 and SPRY2.

The protein localises to the cytoplasm. It localises to the nucleus. The protein resides in the mitochondrion. It catalyses the reaction L-lysyl-[protein] + S-adenosyl-L-methionine = N(6)-methyl-L-lysyl-[protein] + S-adenosyl-L-homocysteine + H(+). The enzyme catalyses N(6)-methyl-L-lysyl-[protein] + S-adenosyl-L-methionine = N(6),N(6)-dimethyl-L-lysyl-[protein] + S-adenosyl-L-homocysteine + H(+). It carries out the reaction N-terminal glycyl-L-lysyl-L-glutamyl-[protein] + 3 S-adenosyl-L-methionine = N-terminal N,N,N-trimethyl-glycyl-L-lysyl-L-glutamyl-[protein] + 3 S-adenosyl-L-homocysteine + 3 H(+). Dual methyltransferase that catalyzes methylation of elongation factor 1-alpha (EEF1A1 and EEF1A2) at two different positions, and is therefore involved in the regulation of mRNA translation. Via its C-terminus, methylates EEF1A1 and EEF1A2 at the N-terminal residue 'Gly-2'. Via its N-terminus dimethylates EEF1A1 and EEF1A2 at residue 'Lys-55'. Has no activity towards core histones H2A, H2B, H3 and H4. This chain is eEF1A lysine and N-terminal methyltransferase (METTL13), found in Bos taurus (Bovine).